A 280-amino-acid chain; its full sequence is 4-diphosphocytidyl-2-C-methyl-D-erythritol kinase (280 aa).

K11 is a catalytic residue. Residue 95–105 (PVGAGLGGGSS) coordinates ATP. D137 is a catalytic residue.

This sequence belongs to the GHMP kinase family. IspE subfamily.

It carries out the reaction 4-CDP-2-C-methyl-D-erythritol + ATP = 4-CDP-2-C-methyl-D-erythritol 2-phosphate + ADP + H(+). The protein operates within isoprenoid biosynthesis; isopentenyl diphosphate biosynthesis via DXP pathway; isopentenyl diphosphate from 1-deoxy-D-xylulose 5-phosphate: step 3/6. In terms of biological role, catalyzes the phosphorylation of the position 2 hydroxy group of 4-diphosphocytidyl-2C-methyl-D-erythritol. The polypeptide is 4-diphosphocytidyl-2-C-methyl-D-erythritol kinase (Citrifermentans bemidjiense (strain ATCC BAA-1014 / DSM 16622 / JCM 12645 / Bem) (Geobacter bemidjiensis)).